A 200-amino-acid polypeptide reads, in one-letter code: Large ribosomal subunit protein uL4c (200 aa).

The segment at 45 to 71 (RAEIRGGGRKPWKQKGTGRARAGSRRS) is disordered. A compositionally biased stretch (basic residues) spans 51-68 (GGRKPWKQKGTGRARAGS).

Belongs to the universal ribosomal protein uL4 family. Part of the 50S ribosomal subunit.

Its subcellular location is the plastid. The protein localises to the chloroplast. Functionally, probably binds the 23S rRNA. The polypeptide is Large ribosomal subunit protein uL4c (rpl4) (Cyanidioschyzon merolae (strain NIES-3377 / 10D) (Unicellular red alga)).